We begin with the raw amino-acid sequence, 297 residues long: ER membrane protein complex subunit 2 (297 aa).

N-acetylalanine is present on alanine 2. TPR repeat units lie at residues histidine 87 to asparagine 120, glutamine 155 to asparagine 188, and cysteine 192 to asparagine 225. Residue lysine 255 is modified to N6-acetyllysine.

Belongs to the EMC2 family. As to quaternary structure, component of the ER membrane protein complex (EMC). Interacts with WNK1 (via amphipathic alpha-helix region); promoting the ER membrane protein complex assembly by preventing EMC2 ubiquitination. Ubiquitinated when soluble in the cytoplasm, leading to its degradation by the proteasome. Interaction with EMC2 prevents its ubiquitination and degradation.

The protein localises to the endoplasmic reticulum membrane. Part of the endoplasmic reticulum membrane protein complex (EMC) that enables the energy-independent insertion into endoplasmic reticulum membranes of newly synthesized membrane proteins. Preferentially accommodates proteins with transmembrane domains that are weakly hydrophobic or contain destabilizing features such as charged and aromatic residues. Involved in the cotranslational insertion of multi-pass membrane proteins in which stop-transfer membrane-anchor sequences become ER membrane spanning helices. It is also required for the post-translational insertion of tail-anchored/TA proteins in endoplasmic reticulum membranes. By mediating the proper cotranslational insertion of N-terminal transmembrane domains in an N-exo topology, with translocated N-terminus in the lumen of the ER, controls the topology of multi-pass membrane proteins like the G protein-coupled receptors. By regulating the insertion of various proteins in membranes, it is indirectly involved in many cellular processes. The chain is ER membrane protein complex subunit 2 from Homo sapiens (Human).